A 341-amino-acid chain; its full sequence is Phenylalanine--tRNA ligase alpha subunit (341 aa).

Glu-254 contacts Mg(2+).

This sequence belongs to the class-II aminoacyl-tRNA synthetase family. Phe-tRNA synthetase alpha subunit type 1 subfamily. Tetramer of two alpha and two beta subunits. Mg(2+) is required as a cofactor.

It localises to the cytoplasm. The enzyme catalyses tRNA(Phe) + L-phenylalanine + ATP = L-phenylalanyl-tRNA(Phe) + AMP + diphosphate + H(+). The protein is Phenylalanine--tRNA ligase alpha subunit of Chlorobium phaeobacteroides (strain DSM 266 / SMG 266 / 2430).